The primary structure comprises 2237 residues: MYRSGSRSSVSSHRSKDGSASGPPPGRPVGASSGPTRRPSSPPPPSCSSLRLPARRHRSPSGHRGRWASPSPPRGRRGSPSPPRGRRASPSPTRGRRASPSPPRGRRGSPSPPRARRGSPSPPRSRRHYPPGLGGFRGSIRGESRADFARDGRGDHPGGGGGSRRRSPGLCSDSSLEESLRITVGNDHFCVSTPERRRLSDRLGSPVDGLQDMDRDDLTDDSVFTRSSQCSRGLERYISREEGPLSPFLGQLDEDYRTRETFLHRPEFSPQSSCHDELLRGTERNRDKLKSSSYSIRSEERSREAKRPRYDDTEKVHSSGGDHSSFTSGTRNYRQRRSSPSPRFLDPEFRELDLARRKREEEEEQSRSLSQELVGVGDDQIGCSIPGLAGVLTTSEPGYSLQRPEEVPMMPKKSILKKRIEADMKPSLQLESFSSGASSGEDHPLYSEHSPLPLSGAIAAFTSEIENKGTTVEADLKEPQSNLYQWGPLREIPKDNSEKFDSFLGFKEKLDLKAEGLEQQTDFLLPHERASQDGSGFSRILSMLADPTITQEKRRRSFPDIEDEEKFLYGDEEEDIKSESPLKSLEDPESAGTRQKANSLPSTPAVKLESLEESNPEYAKIHNLLKTIGLDIGVAEIGKLAARTQERLHGKKPSSRPSADRRLSADRHLSGDRHFSADRCSSVEHSFTADWRSSDPHRPESRETHHSNTQSPEVSHPHPASPVDPYLRTKNSPPFLKSDHPVCHVSGPEVVGSGFQSSVAVRCMLPSAPSTPIRLPHSAALSQFHIPGASQFAAARIPPNYQGSVIPSASFDAYRHYMAYAASRWPMYPASQPPSHPLSDPHRLLPVTKQAARSRPNLRVIPTVTPAKPKQEIPVLGSISVKRIPVRVSIPSLIKYNPKKISDEKNRASQKQKVIEEREKLKTEQEARQKKMFYLTTELERLHKQQGEMLRKKRREKDGHKDPLLMEVSRLQDSIMKDIAELHKETEEAEKKQSELDKVAQILGIDIFDKSLKSSNDSKESTEKPEKEKSKSPEKELSPSNSSSSNKESKMNEKSCIKSPSSTESLQPTVKQSDQPVAAYEYYDAGSHWCKDCNTTCGTMFDFFTHMHNKKHTQTLDPYNRPWASKTQSEAKQDTVKRTDKITVPAKGSEFLIPVTGFYCQLCEEFLGDPISGEQHVKGHQHNENYKKYVEENPLYEERRNLDRQAGLAVVLETERRRQNELKRKLNEKPKEEKIEKKARIVREVKEDDKAPGELEEQLSEDGSAPEKGEVKGNASLRPQVKEEVKKEPSVASIAASFGKFSWKKPEKEEEKGSVVTPGAPKEDTVETSKDRDDGKAEVGKAKPIKIKLSGKTVIAHTSPWTPVVTTSTQTKIRPNLPIPSTVLRKSGSATVSKPAPLNTFLSIKSSGTSTKPLPVVKESSSDLLLPPDIISKAFGGEEVVLKGSPEEKVELAEKNEPSQVPEQMLALLPPPPPPPPPPPPPPPPPPPQAVPQLSAPSPAQANVVLTPVKSNSVISQTFSLGFQGPNILNPGLPVAFMASEQPTVIPSDETAPGVSESDWDQTLISMLVRPPPPLSSVFSEQAKKLEKRNSCLATANAKDLYDIFYSSGGKGAHETKLSSSTLANGESSSLPRTESSDFSSTCTLNSSMSSEDLPQCSALVTATEISNLENPISKGMESTGKWSVVDQIDPKSRDSTYSFLQPLTRLYQNKPYEIVSPKTDTLVMWTSGSSQNDTHKDRPPEGKIRFDLGEPGPPGTDSTSHLSDTHCQTNGPQKLIEINLIDNQNKNQEVYQSEGCRESEMKRKTELKGKVATEEEEEEEEEGANSIEDSNSNHGNRNTWEGEIGQPKLSTVDKKGEQSSKLMTGHENTSKVVIELSPSLPSKRTKIDLFPSLLQNPKSMPELLLLSPAGSGLCLKRQEIWERPEKPGLEDVELQGTRPELTVTIESKVLENFDTTHLEVEGFASLRNLGDMHANFHNSQTEQTRRSPTALSEKMSEEISVSSVMCNPSSSSDIEPVPSFSGFPLESPKTLVLNFETEGAHSSSNSRNGRITSNSLETGHPVENVGHDLGGERTHQALDLLAGGMLSEDVKETSPLQKDLLRMESTTVSPSGLGPSPCLPDLVDFVTRTPGVPKQKPCSPLSEPDAFLKCSSLEMGSPPPEILSVSVSEVAVPQVSEDNDSALNLVKTPPSGSPSRDQVVGGNVSPREMPEQEAAVDVIPDHTRSNVYNSQDYLNG.

Composition is skewed to low complexity over residues 1 to 12 (MYRSGSRSSVSS) and 30 to 39 (GASSGPTRRP). The segment at 1 to 221 (MYRSGSRSSV…DMDRDDLTDD (221 aa)) is disordered. Residues 1 to 1114 (MYRSGSRSSV…THMHNKKHTQ (1114 aa)) form an interaction with AR region. S40 bears the Phosphoserine mark. Basic residues predominate over residues 53-66 (PARRHRSPSGHRGR). Phosphoserine occurs at positions 69, 109, and 111. Basic and acidic residues predominate over residues 140 to 156 (IRGESRADFARDGRGDH). Residues S167 and S205 each carry the phosphoserine modification. Y237 carries the post-translational modification Phosphotyrosine. Residues S239 and S246 each carry the phosphoserine modification. The tract at residues 263–350 (LHRPEFSPQS…SPRFLDPEFR (88 aa)) is disordered. 2 stretches are compositionally biased toward basic and acidic residues: residues 274 to 290 (CHDE…DKLK) and 297 to 317 (RSEE…EKVH). Residues 321-332 (GDHSSFTSGTRN) are compositionally biased toward polar residues. Residues 348-376 (EFRELDLARRKREEEEEQSRSLSQELVGV) adopt a coiled-coil conformation. A phosphoserine mark is found at S497, S502, S531, and S557. Disordered regions lie at residues 551 to 612 (QEKR…ESLE) and 645 to 732 (QERL…TKNS). Acidic residues predominate over residues 560-576 (DIEDEEKFLYGDEEEDI). Glycyl lysine isopeptide (Lys-Gly) (interchain with G-Cter in SUMO2) cross-links involve residues K577, K583, K596, and K607. The span at 577–586 (KSESPLKSLE) shows a compositional bias: basic and acidic residues. The span at 592-602 (GTRQKANSLPS) shows a compositional bias: polar residues. 2 stretches are compositionally biased toward basic and acidic residues: residues 658-677 (SADR…HFSA) and 692-706 (RSSD…ETHH). T865 is modified (phosphothreonine). Residues 904–1003 (EKNRASQKQK…SELDKVAQIL (100 aa)) adopt a coiled-coil conformation. 3 stretches are compositionally biased toward basic and acidic residues: residues 945 to 964 (QQGE…KDPL), 1013 to 1037 (KSSN…EKEL), and 1047 to 1056 (KESKMNEKSC). Disordered regions lie at residues 945 to 966 (QQGE…PLLM) and 1013 to 1072 (KSSN…TVKQ). Position 1032 is a phosphoserine (S1032). Polar residues predominate over residues 1058 to 1072 (KSPSSTESLQPTVKQ). Residue S1059 is modified to Phosphoserine. 2 consecutive Matrin-type zinc fingers follow at residues 1085–1119 (AGSH…LDPY) and 1158–1180 (FYCQ…VKGH). Disordered stretches follow at residues 1245–1289 (VKED…KKEP), 1302–1342 (SWKK…VGKA), and 1366–1395 (TTST…VSKP). Basic and acidic residues-rich tracts occupy residues 1280–1289 (QVKEEVKKEP), 1304–1313 (KKPEKEEEKG), and 1321–1341 (PKED…EVGK). S1445 is modified (phosphoserine). Disordered stretches follow at residues 1449 to 1497 (KVEL…LSAP), 1614 to 1651 (HETK…SMSS), 1727 to 1770 (TSGS…HCQT), and 1790 to 1867 (EVYQ…MTGH). A compositionally biased stretch (pro residues) spans 1469-1490 (LPPPPPPPPPPPPPPPPPPPQA). The span at 1618 to 1639 (LSSSTLANGESSSLPRTESSDF) shows a compositional bias: polar residues. Residues 1640-1651 (SSTCTLNSSMSS) show a composition bias toward low complexity. A compositionally biased stretch (basic and acidic residues) spans 1734 to 1749 (DTHKDRPPEGKIRFDL). Over residues 1757 to 1770 (TDSTSHLSDTHCQT) the composition is skewed to polar residues. Basic and acidic residues predominate over residues 1796-1814 (GCRESEMKRKTELKGKVAT). Positions 1798–1827 (RESEMKRKTELKGKVATEEEEEEEEEGANS) form a coiled coil. Over residues 1815-1824 (EEEEEEEEEG) the composition is skewed to acidic residues. The span at 1828-1840 (IEDSNSNHGNRNT) shows a compositional bias: polar residues. S1878, S1908, S1988, S2044, S2054, S2140, S2143, S2194, and S2206 each carry phosphoserine. The disordered stretch occupies residues 2039–2064 (EGAHSSSNSRNGRITSNSLETGHPVE). Residues 2041–2058 (AHSSSNSRNGRITSNSLE) are compositionally biased toward polar residues. Positions 2178-2237 (EDNDSALNLVKTPPSGSPSRDQVVGGNVSPREMPEQEAAVDVIPDHTRSNVYNSQDYLNG) are disordered. Residues 2226-2237 (SNVYNSQDYLNG) show a composition bias toward polar residues.

In terms of assembly, homodimer. Heterodimer of isoform 1 and isoform 2. Isoform 1 and isoform 2 interact with AR. In terms of tissue distribution, isoform 1 and isoform 2 are highly expressed in testis, moderately expressed in adrenal gland and uterus and faintly expressed in brain, kidney and liver. Isoform 1 is expressed more in adrenal gland, uterus and liver than isoform 2 is. Expression during testicular development of isoform 1 and isoform 2 is restricted to spermatocytes at the pachytene stage of meiotic prophase and to round and elongated spermatids.

It is found in the nucleus. Its function is as follows. Acts as a transcriptional corepressor for AR-mediated transactivation function. May act as a transcriptional regulator during spermatogenesis and in particular, during meiotic division. Acts as a transcriptional coactivator for AR-mediated transactivation function. May act as a transcriptional regulator during spermatogenesis and in particular, during meiotic division. In Mus musculus (Mouse), this protein is Zinc finger protein 318 (Znf318).